We begin with the raw amino-acid sequence, 321 residues long: Sialic acid-binding periplasmic protein SiaP (321 aa).

The signal sequence occupies residues 1–22 (MKTINKITIAILTLSAAASVNA).

It belongs to the bacterial solute-binding protein 7 family. As to quaternary structure, the complex comprises the extracytoplasmic solute receptor protein SiaP, and the two transmembrane proteins SiaQ and SiaM.

It is found in the periplasm. Functionally, part of the tripartite ATP-independent periplasmic (TRAP) transport system SiaPQM that catalyzes unidirectional Na(+)-dependent sialic acid uptake. Binds the common sialic acid N-acetylneuraminic acid (Neu5Ac) with a high affinity. This chain is Sialic acid-binding periplasmic protein SiaP, found in Vibrio cholerae serotype O1 (strain ATCC 39315 / El Tor Inaba N16961).